The chain runs to 193 residues: dCTP deaminase (193 aa).

DCTP-binding positions include 110–115 (RSSLAR), aspartate 128, 136–138 (VLE), tyrosine 171, lysine 178, and glutamine 182. Catalysis depends on glutamate 138, which acts as the Proton donor/acceptor.

This sequence belongs to the dCTP deaminase family. In terms of assembly, homotrimer.

It carries out the reaction dCTP + H2O + H(+) = dUTP + NH4(+). The protein operates within pyrimidine metabolism; dUMP biosynthesis; dUMP from dCTP (dUTP route): step 1/2. Its function is as follows. Catalyzes the deamination of dCTP to dUTP. The polypeptide is dCTP deaminase (Tolumonas auensis (strain DSM 9187 / NBRC 110442 / TA 4)).